The following is a 357-amino-acid chain: Holliday junction branch migration complex subunit RuvB (357 aa).

The segment at 4-195 (TDKLAAKAVS…FGIVARLEFY (192 aa)) is large ATPase domain (RuvB-L). Residues leucine 34, arginine 35, glycine 76, lysine 79, threonine 80, threonine 81, 142–144 (EDY), arginine 185, tyrosine 195, and arginine 232 each bind ATP. Threonine 80 is a Mg(2+) binding site. Residues 196–266 (TPTELARIVT…VADAALAMLD (71 aa)) are small ATPAse domain (RuvB-S). A head domain (RuvB-H) region spans residues 269–357 (AVGFDLMDRK…PARDLWDNNA (89 aa)). 3 residues coordinate DNA: arginine 305, arginine 324, and arginine 329.

This sequence belongs to the RuvB family. Homohexamer. Forms an RuvA(8)-RuvB(12)-Holliday junction (HJ) complex. HJ DNA is sandwiched between 2 RuvA tetramers; dsDNA enters through RuvA and exits via RuvB. An RuvB hexamer assembles on each DNA strand where it exits the tetramer. Each RuvB hexamer is contacted by two RuvA subunits (via domain III) on 2 adjacent RuvB subunits; this complex drives branch migration. In the full resolvosome a probable DNA-RuvA(4)-RuvB(12)-RuvC(2) complex forms which resolves the HJ.

Its subcellular location is the cytoplasm. It catalyses the reaction ATP + H2O = ADP + phosphate + H(+). Its function is as follows. The RuvA-RuvB-RuvC complex processes Holliday junction (HJ) DNA during genetic recombination and DNA repair, while the RuvA-RuvB complex plays an important role in the rescue of blocked DNA replication forks via replication fork reversal (RFR). RuvA specifically binds to HJ cruciform DNA, conferring on it an open structure. The RuvB hexamer acts as an ATP-dependent pump, pulling dsDNA into and through the RuvAB complex. RuvB forms 2 homohexamers on either side of HJ DNA bound by 1 or 2 RuvA tetramers; 4 subunits per hexamer contact DNA at a time. Coordinated motions by a converter formed by DNA-disengaged RuvB subunits stimulates ATP hydrolysis and nucleotide exchange. Immobilization of the converter enables RuvB to convert the ATP-contained energy into a lever motion, pulling 2 nucleotides of DNA out of the RuvA tetramer per ATP hydrolyzed, thus driving DNA branch migration. The RuvB motors rotate together with the DNA substrate, which together with the progressing nucleotide cycle form the mechanistic basis for DNA recombination by continuous HJ branch migration. Branch migration allows RuvC to scan DNA until it finds its consensus sequence, where it cleaves and resolves cruciform DNA. This is Holliday junction branch migration complex subunit RuvB from Ralstonia nicotianae (strain ATCC BAA-1114 / GMI1000) (Ralstonia solanacearum).